We begin with the raw amino-acid sequence, 429 residues long: Histidine--tRNA ligase (429 aa).

Belongs to the class-II aminoacyl-tRNA synthetase family. Homodimer.

The protein localises to the cytoplasm. It carries out the reaction tRNA(His) + L-histidine + ATP = L-histidyl-tRNA(His) + AMP + diphosphate + H(+). The chain is Histidine--tRNA ligase from Alkalilimnicola ehrlichii (strain ATCC BAA-1101 / DSM 17681 / MLHE-1).